The chain runs to 328 residues: NADH:quinone reductase (328 aa).

FMN-binding positions include 22–24, T75, K124, A150, 178–180, and 201–202; these read GMQ, SGG, and GT.

The protein belongs to the nitronate monooxygenase family. Monomer. The cofactor is FMN.

It carries out the reaction a quinone + NADH + H(+) = a quinol + NAD(+). In terms of biological role, catalyzes the NADH-dependent reduction of a broad spectrum of quinone substrates, generating the corresponding hydroquinones. Highly prefers NADH to NADPH as a reducing substrate. Also displays a small NADH oxidase activity. Does not exhibit nitronate monooxygenase activity; is inactive against propionate 3-nitronate, 3-nitropropionate, nitroethane, 1-nitropropane, 2-nitropropane, and the anionic forms ethylnitronate, propyl-1-nitronate, and propyl-2-nitronate. Has no azoreductase activity since it is not able to reduce the azo dye methyl red with NADH. May be required to maintain an appropriate [NAD(+)]/[NADH] ratio for the catabolism of fatty acids in P.aeruginosa PAO1. This chain is NADH:quinone reductase, found in Pseudomonas aeruginosa (strain ATCC 15692 / DSM 22644 / CIP 104116 / JCM 14847 / LMG 12228 / 1C / PRS 101 / PAO1).